A 777-amino-acid chain; its full sequence is Zinc finger FYVE domain-containing protein 1 (777 aa).

The required for localization in the lipid droplets stretch occupies residues 416–777 (MAHSSFFPDE…FNCNKKPGDL (362 aa)). FYVE-type zinc fingers lie at residues 598–659 (NSQI…EARN) and 715–775 (DHEI…KKPG). Zn(2+) contacts are provided by C604, C607, C620, C623, C628, C631, C651, C654, C721, C724, C737, C740, C745, C748, C767, and C770.

In terms of assembly, interacts with RAB18 (in GTP-bound form). Interacts with BSCL2 in a RAB18-dependent manner. Interacts with ZW10. As to quaternary structure, (Microbial infection) Interacts with SARS coronavirus-2/SARS-CoV-2 non-structural protein 6 (nsp6); the interaction is independent of PtdIns3P-binding and leads to endoplasmic reticulum (ER) and double membrane vesicles (DMVs) binding to lipid droplets. Highly expressed in heart. Also detected in the testis. In terms of tissue distribution, expressed in all tissues examined, including, brain, placenta, lung, liver, skeletal muscle, pancreas and kidney. Highly expressed in heart.

The protein resides in the golgi apparatus. It localises to the golgi stack. The protein localises to the endoplasmic reticulum. It is found in the lipid droplet. Its subcellular location is the preautophagosomal structure. The protein resides in the mitochondrion. In terms of biological role, plays a role in the formation of lipid droplets (LDs) which are storage organelles at the center of lipid and energy homeostasis. Regulates the morphology, size and distribution of LDs. Mediates the formation of endoplasmic reticulum-lipid droplets (ER-LD) contacts by forming a complex with RAB18 and ZW10. Binds to phosphatidylinositol 3-phosphate (PtdIns3P) through FYVE-type zinc finger. Functionally, (Microbial infection) Upon SARS coronavirus-2/SARS-CoV-2 infection, mediates through binding with non-structural protein 6 (nsp6) the replication organelle-lipid droplet association required to sustain viral replication. This Homo sapiens (Human) protein is Zinc finger FYVE domain-containing protein 1 (ZFYVE1).